A 246-amino-acid polypeptide reads, in one-letter code: Probable transcriptional regulatory protein HSM_1763 (246 aa).

Belongs to the TACO1 family.

The protein localises to the cytoplasm. The protein is Probable transcriptional regulatory protein HSM_1763 of Histophilus somni (strain 2336) (Haemophilus somnus).